Consider the following 264-residue polypeptide: S-adenosylmethionine decarboxylase proenzyme (264 aa).

S114 serves as the catalytic Schiff-base intermediate with substrate; via pyruvic acid. S114 is modified (pyruvic acid (Ser); by autocatalysis). H119 serves as the catalytic Proton acceptor; for processing activity. C142 (proton donor; for catalytic activity) is an active-site residue.

Belongs to the prokaryotic AdoMetDC family. Type 2 subfamily. As to quaternary structure, heterooctamer of four alpha and four beta chains arranged as a tetramer of alpha/beta heterodimers. The cofactor is pyruvate. Is synthesized initially as an inactive proenzyme. Formation of the active enzyme involves a self-maturation process in which the active site pyruvoyl group is generated from an internal serine residue via an autocatalytic post-translational modification. Two non-identical subunits are generated from the proenzyme in this reaction, and the pyruvate is formed at the N-terminus of the alpha chain, which is derived from the carboxyl end of the proenzyme. The post-translation cleavage follows an unusual pathway, termed non-hydrolytic serinolysis, in which the side chain hydroxyl group of the serine supplies its oxygen atom to form the C-terminus of the beta chain, while the remainder of the serine residue undergoes an oxidative deamination to produce ammonia and the pyruvoyl group blocking the N-terminus of the alpha chain.

The enzyme catalyses S-adenosyl-L-methionine + H(+) = S-adenosyl 3-(methylsulfanyl)propylamine + CO2. It functions in the pathway amine and polyamine biosynthesis; S-adenosylmethioninamine biosynthesis; S-adenosylmethioninamine from S-adenosyl-L-methionine: step 1/1. Catalyzes the decarboxylation of S-adenosylmethionine to S-adenosylmethioninamine (dcAdoMet), the propylamine donor required for the synthesis of the polyamines spermine and spermidine from the diamine putrescine. This chain is S-adenosylmethionine decarboxylase proenzyme, found in Chromohalobacter salexigens (strain ATCC BAA-138 / DSM 3043 / CIP 106854 / NCIMB 13768 / 1H11).